The chain runs to 613 residues: MADGVFQGAIGIDLGTTYSCVATYDSAVEIIANEQGNRVTPSFVAFTSEERLIGDAAKNQAALNPKNTVFDAKRLIGRAFDDESVQKDIKSWPFKVVESNGQPLIEVEYLDETKTFSPQEISSMVLTKMKEIAEAKIGKKVEKAVVTVPAYFNDAQRQATKDAGAIAGLNVLRIINEPTAAAIAYGLGAGKSEKERHVLIFDLGGGTFDVSLLNITGGVFTVKATAGDTHLGGQDFDTNLLEHFKKEFQKKTGNDISSDARALRRLRTACERAKRSLSSGTQTTVEIDSLFDGEDFSANITRARFEDINSALFKSTLEPVEQVLKDAKISKSQVDEVVLVGGSTRIPKVQKLLSDFFDGKQLEKSINPDEAVAYGAAVQGAILTGQSTNDDTKDLLLLDVIPLSLGVAMQGNVFAPVVPRNTTVPTIKRRTFTTVADHQTTVQFPVYQGERVNCTENTLLGEFDLKNIPPMQAGEPVLEAIFEVDANGILKVTAVEKSTGRSANITISNSIGRLSTEEIEKMISDAEKFKSSDDAFAKRHEQKQKLEAYVASVESTVTDPVLSAKLKKSAKDKIEAALSDALQTLEIEESSADDYRKAELALKRAVTKGMATR.

The segment at Met-1–Asp-391 is nucleotide binding domain (NBD). ATP contacts are provided by residues Thr-16–Tyr-18, Lys-73, Gly-205–Thr-207, Glu-271–Ser-278, and Gly-342. An inter-domain linker region spans residues Thr-392 to Pro-402. Positions Leu-403 to Arg-613 are substrate binding domain (SBD). Positions Thr-516–Thr-612 are lid domain (SBDalpha). A Nuclear export signal motif is present at residues Ile-574–Leu-582.

It belongs to the heat shock protein 70 family. Ssb-type Hsp70 subfamily. As to quaternary structure, binds to ribosomes. Binds close to the ribosomal tunnel exit via contacts with both ribosomal proteins and rRNA. Directly interacts with nascent polypeptides. This interaction is dependent on the ribosome-associated complex (RAC). Interacts with SSE1. Interacts with FES1.

It localises to the cytoplasm. The enzyme catalyses ATP + H2O = ADP + phosphate + H(+). Ribosome-bound, Hsp70-type chaperone that assists in the cotranslational folding of newly synthesized proteins in the cytosol. Stimulates folding by interacting with nascent chains, binding to short, largely hydrophobic sequences exposed by unfolded proteins, thereby stabilizing longer, more slowly translated, and aggregation-prone nascent polypeptides and domains that cannot fold stably until fully synthesized. The Hsp70-protein substrate interaction depends on ATP-binding and on allosteric regulation between the NBD and the SBD. The ATP-bound state is characterized by a fast exchange rate of substrate (low affinity state), while in the ADP-bound state exchange is much slower (high affinity state). During the Hsp70 cycle, the chaperone switches between the ATP-bound state (open conformation) and the ADP-bound state (closed conformation) by major conformational rearrangements involving mainly the lid domain. Ssb cooperates with a specific Hsp40/Hsp70 co-chaperone termed the ribosome-associated complex (RAC), which stimulates the ATPase activity of the ribosome-associated pool of Ssbs and switches it to the high affinity substrate binding state. Hsp110 chaperone SSE1 and FES1 act as nucleotide exchange factors that cause substrate release. This Candida albicans (strain WO-1) (Yeast) protein is Ribosome-associated molecular chaperone SSB1 (SSB1).